Reading from the N-terminus, the 606-residue chain is Mannan endo-1,4-beta-mannosidase A (606 aa).

A signal peptide spans 1–19; sequence MKSLNVILTLLSLIISVLS. The CBM6 domain maps to 22–140; the sequence is VYYEAEDGKL…WMWVDAFVIN (119 aa). Positions 164 to 458 constitute a GH26 domain; sequence PAAKKLYDFL…FNHKTVMNMD (295 aa). Residue tryptophan 285 participates in substrate binding. Glutamate 318 functions as the Proton donor in the catalytic mechanism. Tryptophan 323 and tyrosine 378 together coordinate substrate. Glutamate 406 (nucleophile) is an active-site residue. The segment at 472–489 is linker; it reads SGSSHNGNSESNSNTGNS. 3 consecutive CBM10 domains span residues 491–527, 530–566, and 569–605; these read ECWSINLGYPCCIGDYVVTTDENGDWGVENNEWCGIV, SCWSEPLGYPCCVGNTVISADESGDWGVENNEWCGIV, and SCWAEFLGYPCCVGNTVISTDEFGDWGVENDDWCGIL. Position 493 (tryptophan 493) interacts with substrate.

This sequence belongs to the glycosyl hydrolase 26 family.

It catalyses the reaction Random hydrolysis of (1-&gt;4)-beta-D-mannosidic linkages in mannans, galactomannans and glucomannans.. In terms of biological role, hydrolyzes 1,4-beta linked polysaccharide backbones of mannans, one of the major hemicellulose components in hardwoods and softwoods. Shows very high activity against mannohexaose but not against mannopentaose and smaller mannooligosaccharides. The major products released from mannooligosaccharide hydrolysis are mannose and mannobiose. The reiterated 40 AA domain is involved in binding the cellulase-hemicellulase complex. The chain is Mannan endo-1,4-beta-mannosidase A (MANA) from Piromyces sp.